The following is a 435-amino-acid chain: Tol-Pal system protein TolB (435 aa).

The first 20 residues, 1–20 (MRKIIAGVFIFVFLISNLYA), serve as a signal peptide directing secretion.

The protein belongs to the TolB family. The Tol-Pal system is composed of five core proteins: the inner membrane proteins TolA, TolQ and TolR, the periplasmic protein TolB and the outer membrane protein Pal. They form a network linking the inner and outer membranes and the peptidoglycan layer.

The protein localises to the periplasm. In terms of biological role, part of the Tol-Pal system, which plays a role in outer membrane invagination during cell division and is important for maintaining outer membrane integrity. This Francisella tularensis subsp. mediasiatica (strain FSC147) protein is Tol-Pal system protein TolB.